Here is a 119-residue protein sequence, read N- to C-terminus: Small ribosomal subunit protein bS6 (119 aa).

The interval 95–119 (AVTEPSPLAKGNEKREDRKESEDAE) is disordered. The segment covering 105 to 119 (GNEKREDRKESEDAE) has biased composition (basic and acidic residues).

The protein belongs to the bacterial ribosomal protein bS6 family.

Binds together with bS18 to 16S ribosomal RNA. The protein is Small ribosomal subunit protein bS6 of Halorhodospira halophila (strain DSM 244 / SL1) (Ectothiorhodospira halophila (strain DSM 244 / SL1)).